A 262-amino-acid chain; its full sequence is 3-methyl-2-oxobutanoate hydroxymethyltransferase (262 aa).

2 residues coordinate Mg(2+): Asp43 and Asp82. 3-methyl-2-oxobutanoate contacts are provided by residues 43–44 (DS), Asp82, and Lys111. Glu113 contributes to the Mg(2+) binding site. Catalysis depends on Glu180, which acts as the Proton acceptor.

Belongs to the PanB family. In terms of assembly, homodecamer; pentamer of dimers. Mg(2+) is required as a cofactor.

It localises to the cytoplasm. It carries out the reaction 3-methyl-2-oxobutanoate + (6R)-5,10-methylene-5,6,7,8-tetrahydrofolate + H2O = 2-dehydropantoate + (6S)-5,6,7,8-tetrahydrofolate. It participates in cofactor biosynthesis; (R)-pantothenate biosynthesis; (R)-pantoate from 3-methyl-2-oxobutanoate: step 1/2. In terms of biological role, catalyzes the reversible reaction in which hydroxymethyl group from 5,10-methylenetetrahydrofolate is transferred onto alpha-ketoisovalerate to form ketopantoate. This Wolinella succinogenes (strain ATCC 29543 / DSM 1740 / CCUG 13145 / JCM 31913 / LMG 7466 / NCTC 11488 / FDC 602W) (Vibrio succinogenes) protein is 3-methyl-2-oxobutanoate hydroxymethyltransferase.